The following is a 494-amino-acid chain: Glutamyl-tRNA(Gln) amidotransferase subunit A (494 aa).

Residues Lys-72 and Ser-147 each act as charge relay system in the active site. Ser-171 functions as the Acyl-ester intermediate in the catalytic mechanism.

Belongs to the amidase family. GatA subfamily. Heterotrimer of A, B and C subunits.

It carries out the reaction L-glutamyl-tRNA(Gln) + L-glutamine + ATP + H2O = L-glutaminyl-tRNA(Gln) + L-glutamate + ADP + phosphate + H(+). Its function is as follows. Allows the formation of correctly charged Gln-tRNA(Gln) through the transamidation of misacylated Glu-tRNA(Gln) in organisms which lack glutaminyl-tRNA synthetase. The reaction takes place in the presence of glutamine and ATP through an activated gamma-phospho-Glu-tRNA(Gln). The polypeptide is Glutamyl-tRNA(Gln) amidotransferase subunit A (Methylacidiphilum infernorum (isolate V4) (Methylokorus infernorum (strain V4))).